Reading from the N-terminus, the 270-residue chain is Putative [LysW]-aminoadipate/[LysW]-glutamate kinase (270 aa).

Substrate-binding positions include 42-43 (GG), arginine 69, and asparagine 177.

Belongs to the acetylglutamate kinase family. LysZ subfamily.

The protein localises to the cytoplasm. The enzyme catalyses [amino-group carrier protein]-C-terminal-N-(1,4-dicarboxybutan-1-yl)-L-glutamine + ATP = [amino-group carrier protein]-C-terminal-N-(1-carboxy-5-phosphooxy-5-oxopentan-1-yl)-L-glutamine + ADP. It carries out the reaction [amino-group carrier protein]-C-terminal-gamma-(L-glutamyl)-L-glutamate + ATP = [amino-group carrier protein]-C-terminal-gamma-(5-phospho-L-glutamyl)-L-glutamate + ADP. Its pathway is amino-acid biosynthesis; L-lysine biosynthesis via AAA pathway; L-lysine from L-alpha-aminoadipate (Thermus route): step 2/5. It functions in the pathway amino-acid biosynthesis; L-arginine biosynthesis. Functionally, involved in both the arginine and lysine biosynthetic pathways. Phosphorylates the LysW-bound precursors glutamate (for arginine biosynthesis), respectively alpha-aminoadipate (for lysine biosynthesis). This is Putative [LysW]-aminoadipate/[LysW]-glutamate kinase from Aeropyrum pernix (strain ATCC 700893 / DSM 11879 / JCM 9820 / NBRC 100138 / K1).